We begin with the raw amino-acid sequence, 398 residues long: Digeranylgeranylglycerophospholipid reductase (398 aa).

The FAD site is built by Ala-15, Glu-34, Cys-45, Ala-46, Gly-48, Arg-99, Ala-123, Asp-280, Gly-292, and Ile-293. Position 372 (Val-372) interacts with a 2,3-bis-O-(geranylgeranyl)-sn-glycerol 1-phospholipid.

This sequence belongs to the geranylgeranyl reductase family. DGGGPL reductase subfamily. It depends on FAD as a cofactor.

The catalysed reaction is a 2,3-bis-O-phytanyl-sn-glycerol 1-phospholipid + 8 oxidized 2[4Fe-4S]-[ferredoxin] = a 2,3-bis-O-(geranylgeranyl)-sn-glycerol 1-phospholipid + 8 reduced 2[4Fe-4S]-[ferredoxin] + 16 H(+). It catalyses the reaction 2,3-bis-O-(phytanyl)-sn-glycerol 1-phosphate + 8 oxidized 2[4Fe-4S]-[ferredoxin] = 2,3-bis-O-(geranylgeranyl)-sn-glycerol 1-phosphate + 8 reduced 2[4Fe-4S]-[ferredoxin] + 16 H(+). The enzyme catalyses a 2,3-bis-O-phytanyl-sn-glycerol 1-phospholipid + 8 A = a 2,3-bis-O-(geranylgeranyl)-sn-glycerol 1-phospholipid + 8 AH2. It carries out the reaction CDP-2,3-bis-O-(geranylgeranyl)-sn-glycerol + 8 AH2 = CDP-2,3-bis-O-(phytanyl)-sn-glycerol + 8 A. The catalysed reaction is archaetidylserine + 8 AH2 = 2,3-bis-O-phytanyl-sn-glycero-3-phospho-L-serine + 8 A. It functions in the pathway membrane lipid metabolism; glycerophospholipid metabolism. In terms of biological role, is involved in the reduction of 2,3-digeranylgeranylglycerophospholipids (unsaturated archaeols) into 2,3-diphytanylglycerophospholipids (saturated archaeols) in the biosynthesis of archaeal membrane lipids. Catalyzes the formation of archaetidic acid (2,3-di-O-phytanyl-sn-glyceryl phosphate) from 2,3-di-O-geranylgeranylglyceryl phosphate (DGGGP) via the hydrogenation of each double bond of the isoprenoid chains. Is also probably able to reduce double bonds of geranyl groups in CDP-2,3-bis-O-(geranylgeranyl)-sn-glycerol and archaetidylserine, thus acting at various stages in the biosynthesis of archaeal membrane lipids. The protein is Digeranylgeranylglycerophospholipid reductase of Methanoculleus marisnigri (strain ATCC 35101 / DSM 1498 / JR1).